The primary structure comprises 101 residues: Large ribosomal subunit protein bL25 (101 aa).

Belongs to the bacterial ribosomal protein bL25 family. As to quaternary structure, part of the 50S ribosomal subunit; part of the 5S rRNA/L5/L18/L25 subcomplex. Contacts the 5S rRNA. Binds to the 5S rRNA independently of L5 and L18.

This is one of the proteins that binds to the 5S RNA in the ribosome where it forms part of the central protuberance. The sequence is that of Large ribosomal subunit protein bL25 from Thermosynechococcus vestitus (strain NIES-2133 / IAM M-273 / BP-1).